The following is a 548-amino-acid chain: Chaperonin GroEL 1 (548 aa).

ATP contacts are provided by residues 30–33 (TLGP), K51, 87–91 (DGTTT), G415, 479–481 (NAA), and D495.

Belongs to the chaperonin (HSP60) family. Forms a cylinder of 14 subunits composed of two heptameric rings stacked back-to-back. Interacts with the co-chaperonin GroES.

It is found in the cytoplasm. It carries out the reaction ATP + H2O + a folded polypeptide = ADP + phosphate + an unfolded polypeptide.. In terms of biological role, together with its co-chaperonin GroES, plays an essential role in assisting protein folding. The GroEL-GroES system forms a nano-cage that allows encapsulation of the non-native substrate proteins and provides a physical environment optimized to promote and accelerate protein folding. This Vibrio harveyi (Beneckea harveyi) protein is Chaperonin GroEL 1.